We begin with the raw amino-acid sequence, 256 residues long: Eukaryotic translation initiation factor 3 subunit J (256 aa).

The sufficient for interaction with EIF3B stretch occupies residues 1 to 67; it reads MAAAAAGDSD…KEEAEVKPEV (67 aa). Positions 1–106 are disordered; the sequence is MAAAAAGDSD…LEEPEEPKVL (106 aa). A phosphoserine mark is found at Ser9, Ser11, and Ser18. Residues 38-57 show a composition bias toward acidic residues; the sequence is EGEDEDEDVKDNWDDDDDEK. The segment covering 58-104 has biased composition (basic and acidic residues); sequence KEEAEVKPEVKISEKKKIAEKIKEKERQQKKRQEEIKKRLEEPEEPK. Residues 68–133 are a coiled coil; the sequence is KISEKKKIAE…ESDLELAKET (66 aa). A Glycyl lysine isopeptide (Lys-Gly) (interchain with G-Cter in SUMO2) cross-link involves residue Lys104. Position 107 is a phosphothreonine (Thr107). Position 125 is a phosphoserine (Ser125). The tract at residues 214–243 is disordered; the sequence is QSKAKKKKKGVVPGGGLKATMKDDLADYGG. The promotes stable association with the 40S ribosome stretch occupies residues 241–256; sequence YGGYDGGYAQDYEDFM. Position 252 is a phosphotyrosine (Tyr252).

This sequence belongs to the eIF-3 subunit J family. In terms of assembly, component of the eukaryotic translation initiation factor 3 (eIF-3) complex, which is composed of 13 subunits: EIF3A, EIF3B, EIF3C, EIF3D, EIF3E, EIF3F, EIF3G, EIF3H, EIF3I, EIF3J, EIF3K, EIF3L and EIF3M. The eIF-3 complex appears to include 3 stable modules: module A is composed of EIF3A, EIF3B, EIF3G and EIF3I; module B is composed of EIF3F, EIF3H, and EIF3M; and module C is composed of EIF3C, EIF3D, EIF3E, EIF3K and EIF3L. EIF3C of module C binds EIF3B of module A and EIF3H of module B, thereby linking the three modules. EIF3J is a labile subunit that binds to the eIF-3 complex via EIF3B. The eIF-3 complex interacts with RPS6KB1 under conditions of nutrient depletion. Mitogenic stimulation leads to binding and activation of a complex composed of MTOR and RPTOR, leading to phosphorylation and release of RPS6KB1 and binding of EIF4B to eIF-3. Phosphorylated. Phosphorylation is enhanced upon serum stimulation.

It is found in the cytoplasm. In terms of biological role, component of the eukaryotic translation initiation factor 3 (eIF-3) complex, which is required for several steps in the initiation of protein synthesis. The eIF-3 complex associates with the 40S ribosome and facilitates the recruitment of eIF-1, eIF-1A, eIF-2:GTP:methionyl-tRNAi and eIF-5 to form the 43S pre-initiation complex (43S PIC). The eIF-3 complex stimulates mRNA recruitment to the 43S PIC and scanning of the mRNA for AUG recognition. The eIF-3 complex is also required for disassembly and recycling of post-termination ribosomal complexes and subsequently prevents premature joining of the 40S and 60S ribosomal subunits prior to initiation. The eIF-3 complex specifically targets and initiates translation of a subset of mRNAs involved in cell proliferation, including cell cycling, differentiation and apoptosis, and uses different modes of RNA stem-loop binding to exert either translational activation or repression. This subunit binds directly within the mRNA entry channel of the 40S ribosome to the aminoacyl (A) site. It may regulate the interaction between the 43S PIC and mRNA. The sequence is that of Eukaryotic translation initiation factor 3 subunit J from Bos taurus (Bovine).